The following is a 276-amino-acid chain: Large ribosomal subunit protein uL2 (276 aa).

2 disordered regions span residues 30–57 (EKSL…QGGG) and 219–276 (TVRG…RSKK).

This sequence belongs to the universal ribosomal protein uL2 family. As to quaternary structure, part of the 50S ribosomal subunit. Forms a bridge to the 30S subunit in the 70S ribosome.

In terms of biological role, one of the primary rRNA binding proteins. Required for association of the 30S and 50S subunits to form the 70S ribosome, for tRNA binding and peptide bond formation. It has been suggested to have peptidyltransferase activity; this is somewhat controversial. Makes several contacts with the 16S rRNA in the 70S ribosome. The polypeptide is Large ribosomal subunit protein uL2 (Exiguobacterium sibiricum (strain DSM 17290 / CCUG 55495 / CIP 109462 / JCM 13490 / 255-15)).